A 132-amino-acid chain; its full sequence is Interleukin-5 (132 aa).

A signal peptide spans 1–19 (MHLRLTLVALGAAYVCANA). 2 N-linked (GlcNAc...) asparagine glycosylation sites follow: asparagine 74 and asparagine 88.

The protein belongs to the IL-5 family. Homodimer; disulfide-linked. Interacts with IL5RA. Interacts with CSF2RB.

It is found in the secreted. In terms of biological role, homodimeric cytokine expressed predominantly by T-lymphocytes and NK cells that plays an important role in the survival, differentiation, and chemotaxis of eosinophils. Also acts on activated and resting B-cells to induce immunoglobulin production, growth, and differentiation. Mechanistically, exerts its biological effects through a receptor composed of IL5RA subunit and the cytokine receptor common subunit beta/CSF2RB. Binding to the receptor leads to activation of various kinases including LYN, SYK and JAK2 and thereby propagates signals through the RAS-MAPK and JAK-STAT5 pathways respectively. The chain is Interleukin-5 (IL5) from Ovis aries (Sheep).